A 31-amino-acid polypeptide reads, in one-letter code: Cytochrome b6-f complex subunit 6 (31 aa).

A helical transmembrane segment spans residues 4-24 (LTSYFGFLLAALTITPALFIG).

This sequence belongs to the PetL family. The 4 large subunits of the cytochrome b6-f complex are cytochrome b6, subunit IV (17 kDa polypeptide, PetD), cytochrome f and the Rieske protein, while the 4 small subunits are PetG, PetL, PetM and PetN. The complex functions as a dimer.

It localises to the plastid. It is found in the chloroplast thylakoid membrane. Its function is as follows. Component of the cytochrome b6-f complex, which mediates electron transfer between photosystem II (PSII) and photosystem I (PSI), cyclic electron flow around PSI, and state transitions. PetL is important for photoautotrophic growth as well as for electron transfer efficiency and stability of the cytochrome b6-f complex. This is Cytochrome b6-f complex subunit 6 from Agrostis stolonifera (Creeping bentgrass).